Consider the following 103-residue polypeptide: Large ribosomal subunit protein bL21 (103 aa).

The protein belongs to the bacterial ribosomal protein bL21 family. Part of the 50S ribosomal subunit. Contacts protein L20.

Its function is as follows. This protein binds to 23S rRNA in the presence of protein L20. This is Large ribosomal subunit protein bL21 from Bordetella petrii (strain ATCC BAA-461 / DSM 12804 / CCUG 43448).